Reading from the N-terminus, the 271-residue chain is MRWPWSGDDHEQNKSSRLWATSPKSSDWPSTLVEPRTLIATLALTVSTVAGVRLYKTYLRRIPTVNHIKPNYFRRKSLFGQVTSVGDADNFRLYHTPGGRIAGWGLLPWKRIPTKREDLTKQTLHIRIAGVDAPELAHWGREAQPFSKEAHDWLINLIHNRRVRAYIYRRDQYDRVVAQVYVRRWLFRKDVGLEMLRAGLATVYEAKTGAEFGTVEDKYRAAEQKARDSKVGMWAKPTLRQRLGGAPTQPPESPREYKNRHNAAEKLKKPG.

The segment at Met-1 to Asp-27 is disordered. Positions Ser-15 to Asp-27 are enriched in polar residues. A helical transmembrane segment spans residues Leu-38 to Tyr-55. The TNase-like domain occupies Lys-76–Lys-236. Arg-127 is an active-site residue. Asp-132 serves as a coordination point for Ca(2+). Catalysis depends on residues Glu-135 and Arg-175. The disordered stretch occupies residues Ala-226–Gly-271. The span at Ser-253 to Gly-271 shows a compositional bias: basic and acidic residues.

The protein belongs to the LCL3 family.

It localises to the mitochondrion. The protein localises to the membrane. This chain is Probable endonuclease lcl3 (lcl3), found in Pyrenophora tritici-repentis (strain Pt-1C-BFP) (Wheat tan spot fungus).